A 185-amino-acid chain; its full sequence is Ribosome-recycling factor (185 aa).

Belongs to the RRF family.

It localises to the cytoplasm. Functionally, responsible for the release of ribosomes from messenger RNA at the termination of protein biosynthesis. May increase the efficiency of translation by recycling ribosomes from one round of translation to another. This is Ribosome-recycling factor from Vibrio parahaemolyticus serotype O3:K6 (strain RIMD 2210633).